Consider the following 346-residue polypeptide: tRNA N6-adenosine threonylcarbamoyltransferase (346 aa).

Positions 111 and 115 each coordinate Fe cation. Residues 134-138 (LVSGG), Asp167, Gly180, and Asn279 each bind substrate. Asp307 lines the Fe cation pocket.

The protein belongs to the KAE1 / TsaD family. It depends on Fe(2+) as a cofactor.

The protein resides in the cytoplasm. The catalysed reaction is L-threonylcarbamoyladenylate + adenosine(37) in tRNA = N(6)-L-threonylcarbamoyladenosine(37) in tRNA + AMP + H(+). Required for the formation of a threonylcarbamoyl group on adenosine at position 37 (t(6)A37) in tRNAs that read codons beginning with adenine. Is involved in the transfer of the threonylcarbamoyl moiety of threonylcarbamoyl-AMP (TC-AMP) to the N6 group of A37, together with TsaE and TsaB. TsaD likely plays a direct catalytic role in this reaction. This is tRNA N6-adenosine threonylcarbamoyltransferase from Burkholderia lata (strain ATCC 17760 / DSM 23089 / LMG 22485 / NCIMB 9086 / R18194 / 383).